Consider the following 306-residue polypeptide: Transcription factor MYBS1 (306 aa).

Positions 18–73 (WTREDDKAFENALAACAAPPPADGGAPDDDWFAALAASVPGARSAEEVRRHYEALV) constitute a Myb-like domain. Residues 72-86 (LVEDVAAIDAGRVPL) carry the Nuclear export signal 1 motif. Residues 89–142 (YAGEESAAPPDGAGAAAAASKDGGHRRDERKGGGGGYDGGKSCSKAEQERRKGI) are disordered. The span at 92 to 109 (EESAAPPDGAGAAAAASK) shows a compositional bias: low complexity. Basic and acidic residues-rich tracts occupy residues 110 to 120 (DGGHRRDERKG) and 132 to 142 (SKAEQERRKGI). A Nuclear localization signal 1 motif is present at residues 133-140 (KAEQERRK). One can recognise an HTH myb-type domain in the interval 136–192 (QERRKGIPWTEEEHRLFLLGLDKFGKGDWRSISRNFVISRTPTQVASHAQKYFIRLN). The segment at residues 164–188 (WRSISRNFVISRTPTQVASHAQKYF) is a DNA-binding region (H-T-H motif). The Nuclear localization signal 2 signature appears at 196 to 200 (RDRRR). The Nuclear export signal 2 signature appears at 203 to 215 (IHDITSVTAGDQV). The segment covering 228–241 (ATGNPAAAALGPPG) has biased composition (low complexity). Residues 228 to 255 (ATGNPAAAALGPPGMKHHHHHHPGGAPP) form a disordered region.

In terms of assembly, homodimer. Interacts with GAMYB. In terms of tissue distribution, expressed in aboveground tissues, with the highest level in leaves.

The protein localises to the nucleus. Its subcellular location is the cytoplasm. Transcription activator that binds to 5'-TATCCA-3' elements in gene promoters. Derepresses strongly the sugar-repressed transcription of promoters containing SRS or 5'-TATCCA-3' elements. Functions with GAMYB to integrate diverse nutrient starvation and gibberellin (GA) signaling pathways during germination of grains. Sugar, nitrogen and phosphate starvation signals converge and interconnect with GA to promote the co-nuclear import of MYBS1 and GAMYB, resulting in the expression of a large set of GA-inducible hydrolases, transporters, and regulators that are essential for mobilization of nutrient reserves in the endosperm to support seedling growth. In Oryza sativa subsp. japonica (Rice), this protein is Transcription factor MYBS1.